The following is a 349-amino-acid chain: GDP-mannose:glycolipid 4-beta-D-mannosyltransferase (349 aa).

Positions 1 to 14 (MSASASLPVTRAAA) are cleaved as a signal peptide.

The protein belongs to the glycosyltransferase 94 family.

The protein resides in the cell inner membrane. The enzyme catalyses beta-D-GlcA-(1-&gt;2)-alpha-D-Man-(1-&gt;3)-beta-D-Glc-(1-&gt;4)-alpha-D-Glc-di-trans,octa-cis-undecaprenyl diphosphate + GDP-alpha-D-mannose = beta-D-Man-(1-&gt;4)-beta-D-GlcA-(1-&gt;2)-alpha-D-Man-(1-&gt;3)-beta-D-Glc-(1-&gt;4)-alpha-D-Glc-di-trans,octa-cis-undecaprenyl diphosphate + GDP + H(+). It participates in glycan biosynthesis; xanthan biosynthesis. Its function is as follows. Nonprocessive beta-mannosyltransferase that catalyzes the transfer of a mannose residue from GDP-mannose to glucuronic acid-beta-1,2-mannose-alpha-1,3-glucose-beta-1,4-glucose-PP-polyisoprenyl to form the lipid-linked pentasaccharide repeating unit of xanthan, Man-GlcA-Man-Glc(2)-PP-Pol. Is involved in the biosynthesis of the exopolysaccharide xanthan. The polypeptide is GDP-mannose:glycolipid 4-beta-D-mannosyltransferase (gumI) (Xanthomonas campestris pv. campestris (strain ATCC 33913 / DSM 3586 / NCPPB 528 / LMG 568 / P 25)).